The sequence spans 245 residues: Cytochrome c oxidase subunit 2 (245 aa).

Residues 1–36 (MYMLNNMLNDVPTPWGMFFQDSATPNMEGMMELHNN) lie on the Mitochondrial intermembrane side of the membrane. Residues 37 to 56 (VMFYLCMMLGFVSYMLYNML) traverse the membrane as a helical segment. Residues 57–76 (TTYNHSVLPYKYLYHGQFIE) are Mitochondrial matrix-facing. A helical membrane pass occupies residues 77-101 (IVWTTFPAMILLIIAFPSFILLYIC). At 102-245 (DEVIAPAMTI…GEFLAWIDEQ (144 aa)) the chain is on the mitochondrial intermembrane side. Positions 180, 215, 217, 219, 223, and 226 each coordinate Cu cation. Glu217 is a binding site for Mg(2+).

The protein belongs to the cytochrome c oxidase subunit 2 family. In terms of assembly, component of the cytochrome c oxidase (complex IV, CIV), a multisubunit enzyme composed of a catalytic core of 3 subunits and several supernumerary subunits. The complex exists as a monomer or a dimer and forms supercomplexes (SCs) in the inner mitochondrial membrane with ubiquinol-cytochrome c oxidoreductase (cytochrome b-c1 complex, complex III, CIII). Cu cation is required as a cofactor.

The protein resides in the mitochondrion inner membrane. It carries out the reaction 4 Fe(II)-[cytochrome c] + O2 + 8 H(+)(in) = 4 Fe(III)-[cytochrome c] + 2 H2O + 4 H(+)(out). Functionally, component of the cytochrome c oxidase, the last enzyme in the mitochondrial electron transport chain which drives oxidative phosphorylation. The respiratory chain contains 3 multisubunit complexes succinate dehydrogenase (complex II, CII), ubiquinol-cytochrome c oxidoreductase (cytochrome b-c1 complex, complex III, CIII) and cytochrome c oxidase (complex IV, CIV), that cooperate to transfer electrons derived from NADH and succinate to molecular oxygen, creating an electrochemical gradient over the inner membrane that drives transmembrane transport and the ATP synthase. Cytochrome c oxidase is the component of the respiratory chain that catalyzes the reduction of oxygen to water. Electrons originating from reduced cytochrome c in the intermembrane space (IMS) are transferred via the dinuclear copper A center (CU(A)) of subunit 2 and heme A of subunit 1 to the active site in subunit 1, a binuclear center (BNC) formed by heme A3 and copper B (CU(B)). The BNC reduces molecular oxygen to 2 water molecules using 4 electrons from cytochrome c in the IMS and 4 protons from the mitochondrial matrix. The chain is Cytochrome c oxidase subunit 2 (COX2) from Dekkera bruxellensis (Brettanomyces custersii).